A 243-amino-acid polypeptide reads, in one-letter code: UPF0246 protein gbs2036 (243 aa).

Belongs to the UPF0246 family.

This Streptococcus agalactiae serotype III (strain NEM316) protein is UPF0246 protein gbs2036.